We begin with the raw amino-acid sequence, 228 residues long: L-ornithine N5-acetyltransferase NATA1 (228 aa).

Residues 1–21 form a disordered region; it reads MAPPTAAPEPNTVPETSPTGH. The 151-residue stretch at 77 to 227 folds into the N-acetyltransferase domain; that stretch reads VFLLEISPSP…DALQAIDKLN (151 aa). Acetyl-CoA contacts are provided by residues 153 to 155, 161 to 166, 192 to 195, and Y199; these read IFM, RKGFGK, and NVNA.

It belongs to the acetyltransferase family.

Its function is as follows. Acetyltransferase that converts ornithine to N5-acetylornithine, which is likely used in plant defense. The polypeptide is L-ornithine N5-acetyltransferase NATA1 (NATA1) (Arabidopsis thaliana (Mouse-ear cress)).